The primary structure comprises 274 residues: Protein STAY-GREEN, chloroplastic (274 aa).

The N-terminal 48 residues, 1 to 48 (MAAATSTMSLLPPITQQQRWHAADSLVVLASRCHNSRRRRRCRYVVPR), are a transit peptide targeting the chloroplast.

The protein belongs to the staygreen family. Interacts with LHCII complex. Expressed in leaves, roots and developing seeds.

It is found in the plastid. Its subcellular location is the chloroplast membrane. The protein localises to the chloroplast stroma. In terms of biological role, involved in the disassembling mechanism of the intact light-harvesting complex of photosystem II (LHCII) in the thylakoid membranes. Required to trigger chlorophyll degradation during natural and dark-induced leaf senescence. The polypeptide is Protein STAY-GREEN, chloroplastic (SGR) (Oryza sativa subsp. japonica (Rice)).